The sequence spans 185 residues: ATP synthase subunit b 2 (185 aa).

Positions Met-1 to Ala-23 are disordered. A compositionally biased stretch (low complexity) spans Lys-9–Asp-18. Residues Leu-37–Pro-57 traverse the membrane as a helical segment.

This sequence belongs to the ATPase B chain family. F-type ATPases have 2 components, F(1) - the catalytic core - and F(0) - the membrane proton channel. F(1) has five subunits: alpha(3), beta(3), gamma(1), delta(1), epsilon(1). F(0) has three main subunits: a(1), b(2) and c(10-14). The alpha and beta chains form an alternating ring which encloses part of the gamma chain. F(1) is attached to F(0) by a central stalk formed by the gamma and epsilon chains, while a peripheral stalk is formed by the delta and b chains.

It localises to the cell inner membrane. In terms of biological role, f(1)F(0) ATP synthase produces ATP from ADP in the presence of a proton or sodium gradient. F-type ATPases consist of two structural domains, F(1) containing the extramembraneous catalytic core and F(0) containing the membrane proton channel, linked together by a central stalk and a peripheral stalk. During catalysis, ATP synthesis in the catalytic domain of F(1) is coupled via a rotary mechanism of the central stalk subunits to proton translocation. Functionally, component of the F(0) channel, it forms part of the peripheral stalk, linking F(1) to F(0). The b'-subunit is a diverged and duplicated form of b found in plants and photosynthetic bacteria. The chain is ATP synthase subunit b 2 (atpF2) from Rhodopseudomonas palustris (strain BisB5).